Consider the following 122-residue polypeptide: Large ribosomal subunit protein uL14 (122 aa).

This sequence belongs to the universal ribosomal protein uL14 family. Part of the 50S ribosomal subunit. Forms a cluster with proteins L3 and L19. In the 70S ribosome, L14 and L19 interact and together make contacts with the 16S rRNA in bridges B5 and B8.

Functionally, binds to 23S rRNA. Forms part of two intersubunit bridges in the 70S ribosome. The chain is Large ribosomal subunit protein uL14 from Bacillus velezensis (strain DSM 23117 / BGSC 10A6 / LMG 26770 / FZB42) (Bacillus amyloliquefaciens subsp. plantarum).